The primary structure comprises 657 residues: UvrABC system protein B (657 aa).

Positions 23–414 (KSIKKGNKYQ…KENIFHQIMR (392 aa)) constitute a Helicase ATP-binding domain. 36–43 (GVTGSGKT) serves as a coordination point for ATP. The short motif at 89-112 (YYDYYQPEAYIPRTDVFIEKDSST) is the Beta-hairpin element. Positions 431-593 (QVEILFDEAK…ITPTSVKRHI (163 aa)) constitute a Helicase C-terminal domain. The 36-residue stretch at 622–657 (AKLVKELRKQMLEAAKALEFEKAAAIRDEINKLRDL) folds into the UVR domain.

The protein belongs to the UvrB family. In terms of assembly, forms a heterotetramer with UvrA during the search for lesions. Interacts with UvrC in an incision complex.

It localises to the cytoplasm. In terms of biological role, the UvrABC repair system catalyzes the recognition and processing of DNA lesions. A damage recognition complex composed of 2 UvrA and 2 UvrB subunits scans DNA for abnormalities. Upon binding of the UvrA(2)B(2) complex to a putative damaged site, the DNA wraps around one UvrB monomer. DNA wrap is dependent on ATP binding by UvrB and probably causes local melting of the DNA helix, facilitating insertion of UvrB beta-hairpin between the DNA strands. Then UvrB probes one DNA strand for the presence of a lesion. If a lesion is found the UvrA subunits dissociate and the UvrB-DNA preincision complex is formed. This complex is subsequently bound by UvrC and the second UvrB is released. If no lesion is found, the DNA wraps around the other UvrB subunit that will check the other stand for damage. This is UvrABC system protein B from Campylobacter jejuni subsp. jejuni serotype O:2 (strain ATCC 700819 / NCTC 11168).